The following is a 200-amino-acid chain: Glycerol-3-phosphate acyltransferase (200 aa).

5 helical membrane passes run phenylalanine 2 to valine 22, lysine 51 to alanine 71, alanine 84 to phenylalanine 104, leucine 114 to valine 134, and leucine 158 to leucine 178.

The protein belongs to the PlsY family. In terms of assembly, probably interacts with PlsX.

The protein localises to the cell inner membrane. The enzyme catalyses an acyl phosphate + sn-glycerol 3-phosphate = a 1-acyl-sn-glycero-3-phosphate + phosphate. It functions in the pathway lipid metabolism; phospholipid metabolism. Its function is as follows. Catalyzes the transfer of an acyl group from acyl-phosphate (acyl-PO(4)) to glycerol-3-phosphate (G3P) to form lysophosphatidic acid (LPA). This enzyme utilizes acyl-phosphate as fatty acyl donor, but not acyl-CoA or acyl-ACP. In Neisseria meningitidis serogroup A / serotype 4A (strain DSM 15465 / Z2491), this protein is Glycerol-3-phosphate acyltransferase.